The primary structure comprises 312 residues: Olfactory receptor 4F15 (312 aa).

Residues 1 to 25 are Extracellular-facing; the sequence is MNGMNHSVVSEFVFMGLTNSREIQL. Asparagine 5 is a glycosylation site (N-linked (GlcNAc...) asparagine). The helical transmembrane segment at 26–49 threads the bilayer; sequence LLFVFSLLFYFASMMGNLVIVFTV. Over 50-57 the chain is Cytoplasmic; sequence TMDAHLHS. The helical transmembrane segment at 58–79 threads the bilayer; that stretch reads PMYFLLANLSIIDMAFCSITAP. Over 80–100 the chain is Extracellular; that stretch reads KMICDIFKKHKAISFRGCITQ. A disulfide bridge links cysteine 97 with cysteine 189. A helical transmembrane segment spans residues 101-120; sequence IFFSHALGGTEMVLLIAMAF. Residues 121 to 139 lie on the Cytoplasmic side of the membrane; the sequence is DRYMAICKPLHYLTIMSPR. The chain crosses the membrane as a helical span at residues 140 to 158; that stretch reads MCLYFLATSSIIGLIHSLV. The Extracellular portion of the chain corresponds to 159-195; that stretch reads QLVFVVDLPFCGPNIFDSFYCDLPRLLRLACTNTQEL. Residues 196 to 219 traverse the membrane as a helical segment; it reads EFMVTVNSGLISVGSFVLLVISYI. At 220 to 235 the chain is on the cytoplasmic side; that stretch reads FILFTVWKHSSGGLAK. The chain crosses the membrane as a helical span at residues 236-258; sequence ALSTLSAHVTVVILFFGPLMFFY. Residues 259–269 are Extracellular-facing; it reads TWPSPTSHLDK. A helical membrane pass occupies residues 270–289; the sequence is YLAIFDAFITPFLNPVIYTF. Residues 290-312 lie on the Cytoplasmic side of the membrane; that stretch reads RNKDMKVAMRRLCSRLAHFTKIL.

The protein belongs to the G-protein coupled receptor 1 family.

The protein localises to the cell membrane. In terms of biological role, odorant receptor. This Homo sapiens (Human) protein is Olfactory receptor 4F15 (OR4F15).